The primary structure comprises 21 residues: Pedibin (21 aa).

The tract at residues 1-21 (AGEDVSHELEEKEKALANHSE) is disordered.

Its function is as follows. Morphogenetically active peptide. Active in foot development. The polypeptide is Pedibin (Hydra vulgaris (Hydra)).